A 336-amino-acid chain; its full sequence is S-adenosylmethionine:tRNA ribosyltransferase-isomerase (336 aa).

Belongs to the QueA family. In terms of assembly, monomer.

It localises to the cytoplasm. The enzyme catalyses 7-aminomethyl-7-carbaguanosine(34) in tRNA + S-adenosyl-L-methionine = epoxyqueuosine(34) in tRNA + adenine + L-methionine + 2 H(+). The protein operates within tRNA modification; tRNA-queuosine biosynthesis. Transfers and isomerizes the ribose moiety from AdoMet to the 7-aminomethyl group of 7-deazaguanine (preQ1-tRNA) to give epoxyqueuosine (oQ-tRNA). The chain is S-adenosylmethionine:tRNA ribosyltransferase-isomerase from Sulfurihydrogenibium sp. (strain YO3AOP1).